The following is a 428-amino-acid chain: MTLMEDAKKGVITPEIEAVAKAEGIDAEIVRSCVAKGLVAIPKNARRDTLPVGIGKYMSTKINANVGTSRDCIDIDAEIEKAKAAEAFGAHAVMDLSTGGDLDEIRTRILKAVNIPVGTVPIYQAAASRKIVVEMSSDDMFNAVRKHAEQGVDFVTVHAGVNLNSLERLRQSDRIMNVVSRGGSFTLAWMLHNGEDNPFYAEFDYLLEIAKEYDMTLSLGDGMRPGCIADASDRPKFMEFITLGELVKRSREANVQTFVEGPGHVPLNEIELSVRGMKELCDGAPLYLLGPLVTDIAPGFDHITGAIGGAVAGMHGTDFLCMVTPSEHLALPSIEDIKEGLLVTKLAAHTIDLIKEGPRERAWKQDTAMAYARRDLDWEKQFELAIDGDRARKIRDARKTESDACSMCGELCAVKIVKEAFGEKKEEE.

Residues Asn-65, Met-94, Tyr-123, His-158, 180 to 182 (SRG), 221 to 224 (DGMR), and Glu-260 each bind substrate. His-264 is a Zn(2+) binding site. Tyr-287 provides a ligand contact to substrate. His-328 is a Zn(2+) binding site. The [4Fe-4S] cluster site is built by Cys-405, Cys-408, and Cys-412.

The protein belongs to the ThiC family. [4Fe-4S] cluster is required as a cofactor.

It carries out the reaction 5-amino-1-(5-phospho-beta-D-ribosyl)imidazole + S-adenosyl-L-methionine = 4-amino-2-methyl-5-(phosphooxymethyl)pyrimidine + CO + 5'-deoxyadenosine + formate + L-methionine + 3 H(+). It participates in cofactor biosynthesis; thiamine diphosphate biosynthesis. In terms of biological role, catalyzes the synthesis of the hydroxymethylpyrimidine phosphate (HMP-P) moiety of thiamine from aminoimidazole ribotide (AIR) in a radical S-adenosyl-L-methionine (SAM)-dependent reaction. This chain is Phosphomethylpyrimidine synthase 1, found in Methanosarcina mazei (strain ATCC BAA-159 / DSM 3647 / Goe1 / Go1 / JCM 11833 / OCM 88) (Methanosarcina frisia).